A 350-amino-acid chain; its full sequence is MAASIPETQKGVIFYENGGELQYKDIPVPKPKANELLINVKYSGVCHTDLHAWKGDWPLPTKLPLVGGHEGAGVVVAMGENVKGWKIGDFAGIKWLNGSCMSCEYCELSNESNCPEADLSGYTHDGSFQQYATADAVQAAKIPVGTDLAEVAPVLCAGVTVYKALKSANLKAGDWVAISGAAGGLGSLAVQYAKAMGYRVLGIDAGEEKAKLFKDLGGEYFIDFTKSKNIPEEVIEATKGGAHGVINVSVSEFAIEQSTNYVRSNGTVVLVGLPRDAKCKSDVFNQVVKSISIVGSYVGNRADTREAIDFFSRGLVKAPIHVVGLSELPSIYEKMEKGAIVGRYVVDTSK.

Zn(2+) is bound by residues Cys46, His69, Cys100, Cys103, Cys106, Cys114, and Cys156. NAD(+) is bound by residues 180–186 (GAAGGLG), Asp204, Lys209, 271–273 (VGL), and Arg343.

It belongs to the zinc-containing alcohol dehydrogenase family. Homotetramer. Requires Zn(2+) as cofactor.

The protein localises to the cytoplasm. It carries out the reaction a primary alcohol + NAD(+) = an aldehyde + NADH + H(+). It catalyses the reaction a secondary alcohol + NAD(+) = a ketone + NADH + H(+). This is Alcohol dehydrogenase 1 (ADH1) from Kluyveromyces lactis (strain ATCC 8585 / CBS 2359 / DSM 70799 / NBRC 1267 / NRRL Y-1140 / WM37) (Yeast).